The primary structure comprises 371 residues: Rab9 effector protein with kelch motifs (371 aa).

Kelch repeat units follow at residues R47–A93, R98–A144, C149–T201, K202–D251, H252–W301, and L348–E371.

Functionally, rab9 effector required for endosome to trans-Golgi network (TGN) transport. This is Rab9 effector protein with kelch motifs (RABEPK) from Gallus gallus (Chicken).